The following is a 261-amino-acid chain: Phosphate import ATP-binding protein PstB 1 (261 aa).

In terms of domain architecture, ABC transporter spans 8–256 (IKVNNLSFYY…PHDSRTREYV (249 aa)). 40–47 (GPSGCGKS) contacts ATP.

It belongs to the ABC transporter superfamily. Phosphate importer (TC 3.A.1.7) family. In terms of assembly, the complex is composed of two ATP-binding proteins (PstB), two transmembrane proteins (PstC and PstA) and a solute-binding protein (PstS).

It is found in the cell inner membrane. The catalysed reaction is phosphate(out) + ATP + H2O = ADP + 2 phosphate(in) + H(+). Part of the ABC transporter complex PstSACB involved in phosphate import. Responsible for energy coupling to the transport system. The sequence is that of Phosphate import ATP-binding protein PstB 1 from Nostoc sp. (strain PCC 7120 / SAG 25.82 / UTEX 2576).